Consider the following 426-residue polypeptide: MKLQKPKGTQDILPQESAKWQYVEDFARKTFRKYNYGEIRTPIFEHYEVISRSVGDTTDIVTKEMYDFYDKGDRHITLRPEGTAPVVRSYVENKLFAPEVQKPVKVYYMGSMFRYERPQAGRLREFHQIGAECFGSSNPATDVEMIAMAAQFFKDIGITNVSLELNSLGNPESRAAYRQALIDYLTPLKASLSADSQRRLEENPLRVLDSKEPEDKAAVEGAPSILDYLDEESSAYFAAVRSMLETLQIPYVINTNMVRGLDYYNHTIFEFTTEVAGSQLTICAGGRYDGLVAYFGGPETPGVGFGMGLERLLLVLDKQGVELPIETALDVYVAVLGADANGRALELVQALRAQGFAAERDYLDRKLKAQFKSADNFKAKTLITLGESEVESGRVTVKNNHNREEITVSLDQIQENYQLIFEKLGF.

This sequence belongs to the class-II aminoacyl-tRNA synthetase family. As to quaternary structure, homodimer.

Its subcellular location is the cytoplasm. It catalyses the reaction tRNA(His) + L-histidine + ATP = L-histidyl-tRNA(His) + AMP + diphosphate + H(+). The polypeptide is Histidine--tRNA ligase (Streptococcus sanguinis (strain SK36)).